Here is a 258-residue protein sequence, read N- to C-terminus: Ferredoxin--NADP reductase (258 aa).

An FAD-binding FR-type domain is found at 2 to 102 (SNLYTERVLS…RKPTGTLVHD (101 aa)). R51, A52, Y53, S54, F67, I69, L76, T77, and T117 together coordinate FAD. NADP(+) is bound by residues V144, R145, T181, R182, R190, S223, E227, F255, and E257. The FAD site is built by F255, E257, and K258.

It belongs to the ferredoxin--NADP reductase type 1 family. In terms of assembly, monomer. FAD is required as a cofactor.

The catalysed reaction is 2 reduced [2Fe-2S]-[ferredoxin] + NADP(+) + H(+) = 2 oxidized [2Fe-2S]-[ferredoxin] + NADPH. Functionally, transports electrons between ferredoxin and NADPH. Provides electrons to heme oxygenase (pigA) allowing anaerobic heme degradation. Provides electrons necessary to reduce and mobilize Fe(3+) in a heterooligomeric bacterioferritin (BFR) complex to Fe(2+). Reduction of Fe(3+) in a pure FtnA BFR does not require Bfd. Reduction of Fe(3+) in a pure BfrB BFR does require Bfd. In Pseudomonas aeruginosa (strain ATCC 15692 / DSM 22644 / CIP 104116 / JCM 14847 / LMG 12228 / 1C / PRS 101 / PAO1), this protein is Ferredoxin--NADP reductase.